Consider the following 212-residue polypeptide: Peptide methionine sulfoxide reductase MsrA (212 aa).

The active site involves Cys-52.

It belongs to the MsrA Met sulfoxide reductase family.

It catalyses the reaction L-methionyl-[protein] + [thioredoxin]-disulfide + H2O = L-methionyl-(S)-S-oxide-[protein] + [thioredoxin]-dithiol. The enzyme catalyses [thioredoxin]-disulfide + L-methionine + H2O = L-methionine (S)-S-oxide + [thioredoxin]-dithiol. Its function is as follows. Has an important function as a repair enzyme for proteins that have been inactivated by oxidation. Catalyzes the reversible oxidation-reduction of methionine sulfoxide in proteins to methionine. The protein is Peptide methionine sulfoxide reductase MsrA of Cronobacter sakazakii (strain ATCC BAA-894) (Enterobacter sakazakii).